Reading from the N-terminus, the 408-residue chain is Succinylornithine transaminase (408 aa).

Lys-252 bears the N6-(pyridoxal phosphate)lysine mark.

The protein belongs to the class-III pyridoxal-phosphate-dependent aminotransferase family. AstC subfamily. It depends on pyridoxal 5'-phosphate as a cofactor.

It carries out the reaction N(2)-succinyl-L-ornithine + 2-oxoglutarate = N-succinyl-L-glutamate 5-semialdehyde + L-glutamate. It participates in amino-acid degradation; L-arginine degradation via AST pathway; L-glutamate and succinate from L-arginine: step 3/5. Its function is as follows. Catalyzes the transamination of N(2)-succinylornithine and alpha-ketoglutarate into N(2)-succinylglutamate semialdehyde and glutamate. Can also act as an acetylornithine aminotransferase. The protein is Succinylornithine transaminase of Salmonella dublin (strain CT_02021853).